We begin with the raw amino-acid sequence, 69 residues long: Fumarase D (69 aa).

Belongs to the FumD family.

The catalysed reaction is (S)-malate = fumarate + H2O. In vitro catalyzes the addition of water to fumarate, forming malate. Cannot catalyze the reverse reaction. Cannot use the cis-isomer maleate as substrate. This chain is Fumarase D, found in Shigella flexneri.